Consider the following 170-residue polypeptide: MPRLQKNDNFIDKTFTVLADIILKILPTTKEEKQAFCYYRDGMSAQSEGEYAEALENYYEALRLEEDPYDRSYIIYNIGLIYASNGEHIKALEYYHQSLELNPRLPQAFNNIAIIYHYQGLKAADKQDNNMSKSMFDKAAEYWKQAIYLAPNNYIEAQNWLKTTGRLNNK.

TPR repeat units lie at residues 35 to 68 (AFCY…EEDP), 72 to 105 (SYII…NPRL), and 120 to 153 (GLKA…APNN).

The protein belongs to the Ycf3 family.

The protein resides in the plastid. It localises to the chloroplast thylakoid membrane. In terms of biological role, essential for the assembly of the photosystem I (PSI) complex. May act as a chaperone-like factor to guide the assembly of the PSI subunits. This Gracilaria tenuistipitata var. liui (Red alga) protein is Photosystem I assembly protein Ycf3.